A 634-amino-acid polypeptide reads, in one-letter code: Chaperone protein DnaK (634 aa).

The residue at position 193 (Thr193) is a Phosphothreonine; by autocatalysis. A disordered region spans residues 597 to 634 (GNANNTSSTESTTTNNNNEEDSKVVDSDYQEIDKKDGK). Residues 600–613 (NNTSSTESTTTNNN) are compositionally biased toward low complexity. A compositionally biased stretch (basic and acidic residues) spans 616-634 (EDSKVVDSDYQEIDKKDGK).

Belongs to the heat shock protein 70 family.

In terms of biological role, acts as a chaperone. The chain is Chaperone protein DnaK from Ehrlichia canis (strain Jake).